A 213-amino-acid chain; its full sequence is Phosphoheptose isomerase (213 aa).

The region spanning 50–208 is the SIS domain; sequence MAETFEGGGR…IDLVERMLGY (159 aa). 65 to 67 contacts substrate; the sequence is NGG. Zn(2+)-binding residues include His-74 and Glu-78. Residues Glu-78, 109 to 110, 135 to 137, Ser-140, and Gln-188 contribute to the substrate site; these read ND and STS. Residues Gln-188 and His-196 each coordinate Zn(2+).

This sequence belongs to the SIS family. GmhA subfamily. Zn(2+) serves as cofactor.

The protein resides in the cytoplasm. It catalyses the reaction 2 D-sedoheptulose 7-phosphate = D-glycero-alpha-D-manno-heptose 7-phosphate + D-glycero-beta-D-manno-heptose 7-phosphate. The protein operates within carbohydrate biosynthesis; D-glycero-D-manno-heptose 7-phosphate biosynthesis; D-glycero-alpha-D-manno-heptose 7-phosphate and D-glycero-beta-D-manno-heptose 7-phosphate from sedoheptulose 7-phosphate: step 1/1. Catalyzes the isomerization of sedoheptulose 7-phosphate in D-glycero-D-manno-heptose 7-phosphate. The protein is Phosphoheptose isomerase of Chlorobium phaeovibrioides (strain DSM 265 / 1930) (Prosthecochloris vibrioformis (strain DSM 265)).